Reading from the N-terminus, the 308-residue chain is Probable acetylxylan esterase A (308 aa).

The N-terminal stretch at 1–19 (MAPFSFLLTLLLYTLSAGA) is a signal peptide. Asparagine 141 is a glycosylation site (N-linked (GlcNAc...) asparagine). The Charge relay system role is filled by serine 151. Asparagine 193 carries an N-linked (GlcNAc...) asparagine glycan.

It belongs to the carbohydrate esterase 1 (CE1) family. AxeA subfamily. As to quaternary structure, monomer.

The protein localises to the secreted. It catalyses the reaction Deacetylation of xylans and xylo-oligosaccharides.. The protein operates within glycan degradation; xylan degradation. Its function is as follows. Acetylxylan esterase involved in the hydrolysis of xylan, a major structural heterogeneous polysaccharide found in plant biomass representing the second most abundant polysaccharide in the biosphere, after cellulose. Degrades acetylated xylans by cleaving acetyl side groups from the hetero-xylan backbone. This Aspergillus clavatus (strain ATCC 1007 / CBS 513.65 / DSM 816 / NCTC 3887 / NRRL 1 / QM 1276 / 107) protein is Probable acetylxylan esterase A (axeA).